Here is a 563-residue protein sequence, read N- to C-terminus: uncharacterized protein (563 aa).

It belongs to the HyuB family.

This is an uncharacterized protein from Methanocaldococcus jannaschii (strain ATCC 43067 / DSM 2661 / JAL-1 / JCM 10045 / NBRC 100440) (Methanococcus jannaschii).